The sequence spans 288 residues: Sulfur carrier protein FdhD (288 aa).

The active-site Cysteine persulfide intermediate is Cys122. 268 to 273 (FVRGER) is a Mo-bis(molybdopterin guanine dinucleotide) binding site.

This sequence belongs to the FdhD family.

The protein resides in the cytoplasm. Functionally, required for formate dehydrogenase (FDH) activity. Acts as a sulfur carrier protein that transfers sulfur from IscS to the molybdenum cofactor prior to its insertion into FDH. The polypeptide is Sulfur carrier protein FdhD (Anaeromyxobacter dehalogenans (strain 2CP-C)).